The chain runs to 205 residues: Homeobox protein goosecoid-2 (205 aa).

Disordered stretches follow at residues 33 to 58 and 185 to 205; these read SLPARAACPPQPAGRQSPAKPEEPGA and KRASASARLLPGVKKSPKGSC. The homeobox DNA-binding region spans 126 to 185; the sequence is TRRHRTIFSEEQLQALEALFVQNQYPDVSTRERLAGRIRLREERVEVWFKNRRAKWRHQK.

This sequence belongs to the paired homeobox family. Bicoid subfamily. In terms of tissue distribution, detected in adult testis and pituitary, and in 9-10 week fetal tissue (thorax). Probably expressed in other tissues at low levels.

It localises to the nucleus. In terms of biological role, may have a role in development. May regulate its own transcription. May bind the bicoid consensus sequence TAATCC. This Homo sapiens (Human) protein is Homeobox protein goosecoid-2 (GSC2).